Here is a 317-residue protein sequence, read N- to C-terminus: Putative HTH-type transcriptional regulatory protein Mboo_0195 (317 aa).

An HTH cro/C1-type domain is found at 132–185 (LRELRERRSMSLGDLGQVLGVSRRTISKYESGMGTTLEVAIRIEEYFNTGVVES). The H-T-H motif DNA-binding region spans 143–162 (LGDLGQVLGVSRRTISKYES).

In Methanoregula boonei (strain DSM 21154 / JCM 14090 / 6A8), this protein is Putative HTH-type transcriptional regulatory protein Mboo_0195.